The sequence spans 655 residues: D-xylonate dehydratase YagF (655 aa).

Belongs to the IlvD/Edd family.

The enzyme catalyses D-xylonate = 2-dehydro-3-deoxy-D-arabinonate + H2O. Functionally, catalyzes the dehydration of D-xylonic acid to form 2-dehydro-3-deoxy-D-pentonate. This chain is D-xylonate dehydratase YagF (yagF), found in Escherichia coli (strain K12).